The sequence spans 556 residues: MQFDYIIIGAGSAGNVLATRLTEDPNTTVLLLEAGGPDYRFDFRTQMPAALAFPLQGKRYNWAYETEPEPFMNNRRMECGRGKGLGGSSLINGMCYIRGNALDLDNWAQEPGLENWSYLDCLPYYRKAETRDVGENDYHGGDGPVSVITSKPGVNPLFEAMIEAGMQAGYPRTDDLNGYQQEGFGPMDRTVTPHGRRASTSRGYLDQAKSRPNLTIRTHAMTDHIIFDGKRAVGVEWLEGDSTIPTRAAANKEVLLCAGAIASPQILQRSGVGNAELLAEFDIPLVHELPGVGENLQDHLEMYLQYECKEPVSLYPALQWWNQPRIGAEWLFGGTGVGASNHFEAGGFIRSREEFAWPNIQYHFLPVAINYNGSNAVKEHGFQCHVGSMRSPSRGHVRIKSRDPHQHPGILFNYMSHEQDWQEFRDAIRITREIMHQPALDQYRGREISPGVECQTDEQLDEFVRNHAETAFHPCGTCKMGYDEMAVVDGEGRVHGLEGLRVVDASIMPQIITGNLNATTIMIGEKIADMIRGKEALPRSTAGYFVANGMTVRAKK.

FAD is bound at residue 4 to 33; it reads DYIIIGAGSAGNVLATRLTEDPNTTVLLLE. Catalysis depends on H473, which acts as the Proton acceptor.

This sequence belongs to the GMC oxidoreductase family. The cofactor is FAD.

It catalyses the reaction choline + A = betaine aldehyde + AH2. It carries out the reaction betaine aldehyde + NAD(+) + H2O = glycine betaine + NADH + 2 H(+). It participates in amine and polyamine biosynthesis; betaine biosynthesis via choline pathway; betaine aldehyde from choline (cytochrome c reductase route): step 1/1. Involved in the biosynthesis of the osmoprotectant glycine betaine. Catalyzes the oxidation of choline to betaine aldehyde and betaine aldehyde to glycine betaine at the same rate. The protein is Oxygen-dependent choline dehydrogenase of Escherichia coli O6:K15:H31 (strain 536 / UPEC).